A 353-amino-acid chain; its full sequence is UDP-N-acetylglucosamine--N-acetylmuramyl-(pentapeptide) pyrophosphoryl-undecaprenol N-acetylglucosamine transferase (353 aa).

Residues 10–12, Asn124, Ser183, and Gln283 contribute to the UDP-N-acetyl-alpha-D-glucosamine site; that span reads TGG.

The protein belongs to the glycosyltransferase 28 family. MurG subfamily.

The protein resides in the cell inner membrane. It carries out the reaction di-trans,octa-cis-undecaprenyl diphospho-N-acetyl-alpha-D-muramoyl-L-alanyl-D-glutamyl-meso-2,6-diaminopimeloyl-D-alanyl-D-alanine + UDP-N-acetyl-alpha-D-glucosamine = di-trans,octa-cis-undecaprenyl diphospho-[N-acetyl-alpha-D-glucosaminyl-(1-&gt;4)]-N-acetyl-alpha-D-muramoyl-L-alanyl-D-glutamyl-meso-2,6-diaminopimeloyl-D-alanyl-D-alanine + UDP + H(+). It participates in cell wall biogenesis; peptidoglycan biosynthesis. Its function is as follows. Cell wall formation. Catalyzes the transfer of a GlcNAc subunit on undecaprenyl-pyrophosphoryl-MurNAc-pentapeptide (lipid intermediate I) to form undecaprenyl-pyrophosphoryl-MurNAc-(pentapeptide)GlcNAc (lipid intermediate II). The sequence is that of UDP-N-acetylglucosamine--N-acetylmuramyl-(pentapeptide) pyrophosphoryl-undecaprenol N-acetylglucosamine transferase from Helicobacter pylori (strain P12).